Here is a 168-residue protein sequence, read N- to C-terminus: Large ribosomal subunit protein uL10 (168 aa).

The protein belongs to the universal ribosomal protein uL10 family. In terms of assembly, part of the ribosomal stalk of the 50S ribosomal subunit. The N-terminus interacts with L11 and the large rRNA to form the base of the stalk. The C-terminus forms an elongated spine to which L12 dimers bind in a sequential fashion forming a multimeric L10(L12)X complex.

Its function is as follows. Forms part of the ribosomal stalk, playing a central role in the interaction of the ribosome with GTP-bound translation factors. The chain is Large ribosomal subunit protein uL10 from Clostridium acetobutylicum (strain ATCC 824 / DSM 792 / JCM 1419 / IAM 19013 / LMG 5710 / NBRC 13948 / NRRL B-527 / VKM B-1787 / 2291 / W).